Consider the following 265-residue polypeptide: uncharacterized protein (265 aa).

Residues 3–23 form a helical; Signal-anchor for type II membrane protein membrane-spanning segment; sequence KKTWVYIIIAIIIILLLVWYF. Asn-37 and Asn-125 each carry an N-linked (GlcNAc...) asparagine; by host glycan. Positions 37-94 form a coiled coil; that stretch reads NQTYNMLQQQISSLNQQILFLKQQISNLHVPAPTSTVNSLRQTVSDINQQVSTINNQI. The stretch at 158-257 forms a coiled coil; the sequence is NVADNELNVL…KNSLGSAVRN (100 aa).

The protein resides in the host membrane. It is found in the virion. This is an uncharacterized protein from Acanthamoeba polyphaga (Amoeba).